Here is an 89-residue protein sequence, read N- to C-terminus: UPF0223 protein Bcer98_2663 (89 aa).

The protein belongs to the UPF0223 family.

The protein is UPF0223 protein Bcer98_2663 of Bacillus cytotoxicus (strain DSM 22905 / CIP 110041 / 391-98 / NVH 391-98).